The sequence spans 262 residues: Diaminopimelate epimerase (262 aa).

Substrate is bound by residues N17, Q45, and N63. The active-site Proton donor is the C72. Substrate-binding positions include 73 to 74 (GN), N154, N187, and 205 to 206 (ER). The Proton acceptor role is filled by C214. Residue 215–216 (GS) coordinates substrate.

Belongs to the diaminopimelate epimerase family. As to quaternary structure, homodimer.

Its subcellular location is the cytoplasm. It catalyses the reaction (2S,6S)-2,6-diaminopimelate = meso-2,6-diaminopimelate. It participates in amino-acid biosynthesis; L-lysine biosynthesis via DAP pathway; DL-2,6-diaminopimelate from LL-2,6-diaminopimelate: step 1/1. In terms of biological role, catalyzes the stereoinversion of LL-2,6-diaminopimelate (L,L-DAP) to meso-diaminopimelate (meso-DAP), a precursor of L-lysine and an essential component of the bacterial peptidoglycan. This chain is Diaminopimelate epimerase, found in Wolbachia sp. subsp. Drosophila simulans (strain wRi).